The primary structure comprises 499 residues: Citrinin biosynthesis cluster MFS transporter mrr1 (499 aa).

The interval 1-29 is disordered; that stretch reads MKEEIDAPVSTDASGTDLENARDQPSGEK. The next 8 helical transmembrane spans lie at 58-78, 95-115, 124-144, 155-175, 187-207, 215-235, 291-311, and 327-347; these read SLIT…SSVF, VMTL…LVWG, LKPL…VAVA, FFLG…LADF, LFSA…GFIV, WTAW…FLTL, ILVC…LFFV, and GIAA…CLLV. Residue Asn-361 is glycosylated (N-linked (GlcNAc...) asparagine). Transmembrane regions (helical) follow at residues 370 to 390, 395 to 415, 443 to 463, and 467 to 487; these read LPPM…FGWT, ISWA…LMIW, AVGA…GVDW, and LLGF…FYGA.

It belongs to the major facilitator superfamily. CAR1 family.

It is found in the membrane. In terms of biological role, MFS transporter; part of the gene cluster that mediates the biosynthesis the mycotoxin citrinin, a hepato-nephrotoxic compound to humans due to inhibition of respiration complex III. The sequence is that of Citrinin biosynthesis cluster MFS transporter mrr1 from Monascus ruber (Mold).